A 513-amino-acid polypeptide reads, in one-letter code: Cytochrome P450 4d10 (513 aa).

The heme site is built by E317 and C457.

It belongs to the cytochrome P450 family. It depends on heme as a cofactor.

It is found in the endoplasmic reticulum membrane. The protein resides in the microsome membrane. May play an important role in the maintenance of specific insect-host plant relationships. May be involved in xenobiotic metabolism. In Drosophila mettleri (Fruit fly), this protein is Cytochrome P450 4d10 (Cyp4d10).